Consider the following 182-residue polypeptide: Adenylate kinase (182 aa).

12-17 is an ATP binding site; that stretch reads GAGKGT. An NMP region spans residues 32–61; the sequence is STGDLLRDEVSSGSVLGIKAAEIMNKGELV. Residues threonine 33, arginine 38, 59 to 61, 85 to 88, and glutamine 92 each bind AMP; these read ELV and GFPR. Residues 126-132 are LID; sequence ERGRQDD. Arginine 127 contacts ATP. Residues arginine 129 and arginine 140 each contribute to the AMP site. Alanine 168 serves as a coordination point for ATP.

It belongs to the adenylate kinase family. Monomer.

Its subcellular location is the cytoplasm. The enzyme catalyses AMP + ATP = 2 ADP. It functions in the pathway purine metabolism; AMP biosynthesis via salvage pathway; AMP from ADP: step 1/1. Functionally, catalyzes the reversible transfer of the terminal phosphate group between ATP and AMP. Plays an important role in cellular energy homeostasis and in adenine nucleotide metabolism. The chain is Adenylate kinase from Prochlorococcus marinus (strain NATL1A).